Reading from the N-terminus, the 444-residue chain is Protein translocase subunit SecY (444 aa).

10 helical membrane-spanning segments follow: residues 24–44 (FFVI…IPGI), 77–97 (ILAL…LLTV), 123–143 (GTLV…PNMV), 153–173 (MFTL…MWLG), 181–201 (IGNG…PKAI), 215–235 (VLLL…VVFM), 269–289 (MAGV…GTLA), 318–338 (YVML…ALVF), 376–396 (LAGA…MVAW), and 400–420 (FYFG…FMAQ).

It belongs to the SecY/SEC61-alpha family. As to quaternary structure, component of the Sec protein translocase complex. Heterotrimer consisting of SecY, SecE and SecG subunits. The heterotrimers can form oligomers, although 1 heterotrimer is thought to be able to translocate proteins. Interacts with the ribosome. Interacts with SecDF, and other proteins may be involved. Interacts with SecA.

The protein localises to the cell inner membrane. The central subunit of the protein translocation channel SecYEG. Consists of two halves formed by TMs 1-5 and 6-10. These two domains form a lateral gate at the front which open onto the bilayer between TMs 2 and 7, and are clamped together by SecE at the back. The channel is closed by both a pore ring composed of hydrophobic SecY resides and a short helix (helix 2A) on the extracellular side of the membrane which forms a plug. The plug probably moves laterally to allow the channel to open. The ring and the pore may move independently. The chain is Protein translocase subunit SecY from Vibrio cholerae serotype O1 (strain ATCC 39315 / El Tor Inaba N16961).